Here is a 174-residue protein sequence, read N- to C-terminus: Gamma-crystallin C (174 aa).

Beta/gamma crystallin 'Greek key' domains are found at residues 2–40 (GKITFYEDRGFQGRHYECSSDCPNLQPYFSRCNSIRVDS) and 41–83 (GCWM…CLIP). The residue at position 23 (C23) is an S-methylcysteine. The connecting peptide stretch occupies residues 84 to 87 (QTSS). Beta/gamma crystallin 'Greek key' domains follow at residues 88-128 (HRLR…HVLE) and 129-171 (GCWV…RRVV).

This sequence belongs to the beta/gamma-crystallin family. Monomer.

Its function is as follows. Crystallins are the dominant structural components of the vertebrate eye lens. The sequence is that of Gamma-crystallin C (CRYGC) from Canis lupus familiaris (Dog).